A 555-amino-acid chain; its full sequence is Natural resistance-associated macrophage protein 1 (555 aa).

The Cytoplasmic portion of the chain corresponds to 1 to 63 (MSGSGPAMAS…STPGFSFRKL (63 aa)). A helical membrane pass occupies residues 64–81 (WAFTGPGFLMSIAYLDPG). At 82 to 90 (NVESDLQCG) the chain is on the extracellular side. A helical membrane pass occupies residues 91-110 (AVAGFKLLWVLLWATVLGLL). The Cytoplasmic segment spans residues 111 to 147 (CQRLAIRLGVVTGKDLAEICYLYYPRVPRVLLWLMME). The helical transmembrane segment at 148 to 168 (IAIIGSDMQEVIGTAIAFSLL) threads the bilayer. At 169–172 (SAGR) the chain is on the extracellular side. A helical membrane pass occupies residues 173-192 (IPLWGGVLITITDTLFFLFL). Topologically, residues 193–201 (DKYGLRKLE) are cytoplasmic. Residues 202–222 (AFFGFLITIMALTFGYEYVMV) traverse the membrane as a helical segment. Topologically, residues 223 to 245 (RPAQTEVLKGIFLPYCPGCGREE) are extracellular. Residues 246-264 (LLQAVGIVGAIIMPHNIFL) traverse the membrane as a helical segment. Residues 265-292 (HSSLVKTRAIDRSKKEEVKEANMYFLTE) lie on the Cytoplasmic side of the membrane. Residues 293 to 312 (SCLALFVSFLINLFVMAVFG) form a helical membrane-spanning segment. Over 313-354 (EAFYHQRNEDVHNKCVNSSVSRYASIFPINNETVSVDIYQGG) the chain is Extracellular. Residues Asn329 and Asn343 are each glycosylated (N-linked (GlcNAc...) asparagine). Residues 355–374 (VILGCYFGAAALYIWAVGIL) traverse the membrane as a helical segment. The Cytoplasmic segment spans residues 375–405 (AAGQSSTMTGTYAGQFVMEGFLQLRWSRFTR). A helical membrane pass occupies residues 406 to 423 (VLFTRSLAILPTLFVAAF). Topologically, residues 424-434 (RDVSQLTGMND) are extracellular. A helical transmembrane segment spans residues 435 to 455 (LLNVLQSILLPFAVLPVLTFT). Topologically, residues 456-471 (SLRPLMHDFANGLLGQ) are cytoplasmic. Residues 472–493 (VLMSLITGLVCAINVYFVVDFL) form a helical membrane-spanning segment. Topologically, residues 494–501 (PTLRGLGY) are extracellular. A helical membrane pass occupies residues 502–521 (LIPLGLLLVAYVAFVTYLLW). At 522–555 (TCSIAHGARFLARGRYNRFSFDVTADVPGLAGPH) the chain is on the cytoplasmic side.

The protein belongs to the NRAMP family. Macrophages; spleen and thymus and at lower level in liver and lung.

The protein localises to the late endosome membrane. The protein resides in the lysosome membrane. The enzyme catalyses Zn(2+)(in) + H(+)(out) = Zn(2+)(out) + H(+)(in). It carries out the reaction Fe(2+)(in) + H(+)(out) = Fe(2+)(out) + H(+)(in). It catalyses the reaction Mn(2+)(in) + H(+)(out) = Mn(2+)(out) + H(+)(in). In terms of biological role, macrophage-specific antiporter that fluxes metal ions in either direction against a proton gradient. Localized to late endosomal lysosomal membranes, delivers bivalent cations from the cytosol into these acidic compartments where they may directly affect antimicrobial activity. Involved in iron metabolism and host natural resistance to infection with intracellular parasites. Pathogen resistance involves sequestration of Fe(2+) and Mn(2+), cofactors of both prokaryotic and eukaryotic catalases and superoxide dismutases, not only to protect the macrophage against its own generation of reactive oxygen species, but to deny the cations to the pathogen for synthesis of its protective enzymes. This Gallus gallus (Chicken) protein is Natural resistance-associated macrophage protein 1 (SLC11A1).